Reading from the N-terminus, the 98-residue chain is Large ribosomal subunit protein uL23 (98 aa).

This sequence belongs to the universal ribosomal protein uL23 family. Part of the 50S ribosomal subunit. Contacts protein L29, and trigger factor when it is bound to the ribosome.

In terms of biological role, one of the early assembly proteins it binds 23S rRNA. One of the proteins that surrounds the polypeptide exit tunnel on the outside of the ribosome. Forms the main docking site for trigger factor binding to the ribosome. This chain is Large ribosomal subunit protein uL23, found in Nitrosococcus oceani (strain ATCC 19707 / BCRC 17464 / JCM 30415 / NCIMB 11848 / C-107).